A 476-amino-acid chain; its full sequence is Adenosylhomocysteinase (476 aa).

Thr61, Asp140, and Glu200 together coordinate substrate. Residue Thr201–Thr203 participates in NAD(+) binding. Substrate-binding residues include Lys230 and Asp234. NAD(+) contacts are provided by residues Asn235, Gly264 to Gly269, Glu287, Asn322, Ile343 to His345, and Asn389.

It belongs to the adenosylhomocysteinase family. It depends on NAD(+) as a cofactor.

The protein resides in the cytoplasm. The catalysed reaction is S-adenosyl-L-homocysteine + H2O = L-homocysteine + adenosine. It participates in amino-acid biosynthesis; L-homocysteine biosynthesis; L-homocysteine from S-adenosyl-L-homocysteine: step 1/1. Its function is as follows. May play a key role in the regulation of the intracellular concentration of adenosylhomocysteine. The sequence is that of Adenosylhomocysteinase from Acidovorax ebreus (strain TPSY) (Diaphorobacter sp. (strain TPSY)).